The chain runs to 144 residues: Large ribosomal subunit protein uL16 (144 aa).

The protein belongs to the universal ribosomal protein uL16 family. Part of the 50S ribosomal subunit.

Binds 23S rRNA and is also seen to make contacts with the A and possibly P site tRNAs. This Halothermothrix orenii (strain H 168 / OCM 544 / DSM 9562) protein is Large ribosomal subunit protein uL16.